The chain runs to 106 residues: Large ribosomal subunit protein cL38 (106 aa).

The transit peptide at Met-1 to Glu-39 directs the protein to the chloroplast. The tract at residues Ser-42 to Thr-70 is disordered. Residues Pro-44–Lys-59 are compositionally biased toward basic residues.

The protein belongs to the chloroplast-specific ribosomal protein cL38 family. As to quaternary structure, part of the 50S ribosomal subunit.

Its subcellular location is the plastid. The protein localises to the chloroplast. In Arabidopsis thaliana (Mouse-ear cress), this protein is Large ribosomal subunit protein cL38 (PSRP6).